Reading from the N-terminus, the 330-residue chain is Phytanoyl-CoA hydroxylase-interacting protein (330 aa).

One can recognise a Fibronectin type-III domain in the interval 6 to 115 (TPHSIEINNI…ETVEFCTGDY (110 aa)). Asparagine 14 and asparagine 325 each carry an N-linked (GlcNAc...) asparagine glycan.

Belongs to the PHYHIP family. In terms of assembly, interacts with PHYH and ADGRB1. In terms of tissue distribution, highly expressed in the brain.

Its function is as follows. Its interaction with PHYH suggests a role in the development of the central system. The sequence is that of Phytanoyl-CoA hydroxylase-interacting protein (Phyhip) from Mus musculus (Mouse).